A 227-amino-acid polypeptide reads, in one-letter code: Protein PhlB (227 aa).

The N-terminal stretch at 1 to 35 (MPEGRRLRRALAIALLALVAVTGLLMMAKEQQMGQ) is a signal peptide. 4 ANK repeats span residues 75 to 104 (RQVTLLQWAVLSQQPDSVQALLDLGADPAA), 108 to 137 (DGNSALHTAAMLQDAQYLRLLLAEGAQMNV), 142 to 171 (TGATPLAAAVLAGREEQLRLLLAAGADTTL), and 175 to 204 (LGDTPLHLAAKINRRTWRCCCCRPGPMPGR).

Cell-protective protein that neutralizes the intracellular lysis capacity of phospholipase A1 through a direct interaction with the enzyme. This Serratia liquefaciens protein is Protein PhlB (phlB).